The chain runs to 597 residues: U3 small nucleolar RNA-associated protein 6 homolog (597 aa).

HAT repeat units follow at residues 121 to 153 (ATKTRLSKVFSAMLAIHSNKPALWIMAAKWEME), 156 to 188 (LSSESARQLFLRALRFHPECPKLYKEYFRMELM), 304 to 335 (RKEERCCAVYEEAVKTLPTEAMWKCYITFCLE), 488 to 520 (GGYKKARAVFKSLQESRPFSVDFFRKMIQFEKE), and 524 to 557 (CNMANIREYYERALREFGSADSDLWMDYMKEELN).

The protein belongs to the UTP6 family. As to quaternary structure, part of the small subunit (SSU) processome, composed of more than 70 proteins and the RNA chaperone small nucleolar RNA (snoRNA) U3.

The protein resides in the nucleus. Its subcellular location is the nucleolus. Functionally, part of the small subunit (SSU) processome, first precursor of the small eukaryotic ribosomal subunit. During the assembly of the SSU processome in the nucleolus, many ribosome biogenesis factors, an RNA chaperone and ribosomal proteins associate with the nascent pre-rRNA and work in concert to generate RNA folding, modifications, rearrangements and cleavage as well as targeted degradation of pre-ribosomal RNA by the RNA exosome. Involved in nucleolar processing of pre-18S ribosomal RNA. The protein is U3 small nucleolar RNA-associated protein 6 homolog of Homo sapiens (Human).